The following is a 378-amino-acid chain: Glutamate 5-kinase (378 aa).

Residue Lys-20 participates in ATP binding. 3 residues coordinate substrate: Ser-60, Asp-147, and Asn-159. ATP is bound by residues 179–180 and 221–227; these read TD and TGGMATK. Positions 286–364 constitute a PUA domain; the sequence is AGDIVIDAGA…QEIYKVLGYE (79 aa).

The protein belongs to the glutamate 5-kinase family.

It is found in the cytoplasm. The catalysed reaction is L-glutamate + ATP = L-glutamyl 5-phosphate + ADP. The protein operates within amino-acid biosynthesis; L-proline biosynthesis; L-glutamate 5-semialdehyde from L-glutamate: step 1/2. In terms of biological role, catalyzes the transfer of a phosphate group to glutamate to form L-glutamate 5-phosphate. This is Glutamate 5-kinase from Photobacterium profundum (strain SS9).